The primary structure comprises 182 residues: Adenine phosphoribosyltransferase (182 aa).

It belongs to the purine/pyrimidine phosphoribosyltransferase family. In terms of assembly, homodimer.

Its subcellular location is the cytoplasm. It catalyses the reaction AMP + diphosphate = 5-phospho-alpha-D-ribose 1-diphosphate + adenine. The protein operates within purine metabolism; AMP biosynthesis via salvage pathway; AMP from adenine: step 1/1. Catalyzes a salvage reaction resulting in the formation of AMP, that is energically less costly than de novo synthesis. The polypeptide is Adenine phosphoribosyltransferase (Shewanella frigidimarina (strain NCIMB 400)).